Here is a 929-residue protein sequence, read N- to C-terminus: Protocadherin gamma-B7 (929 aa).

Residues 1 to 30 (MGGSCAQRRRAGPRQVLFPLLLPLFYPTLC) form the signal peptide. Cadherin domains are found at residues 31 to 133 (EPIR…APQF), 134 to 242 (QKDE…PPVF), 243 to 347 (SQDV…SPEI), 348 to 452 (IITS…APVF), 453 to 562 (GQSA…APRV), and 570 to 675 (DGSA…LPDF). At 31-691 (EPIRYSIPEE…SDSQAEMQFY (661 aa)) the chain is on the extracellular side. Asn419 and Asn545 each carry an N-linked (GlcNAc...) asparagine glycan. A helical transmembrane segment spans residues 692–712 (LVVALALISVLFLLAVILAIA). The Cytoplasmic portion of the chain corresponds to 713 to 929 (LRLRQSFSPT…KKKSGKKEKK (217 aa)). 2 disordered regions span residues 806 to 838 (QAPP…WPNN) and 899 to 929 (ATLT…KEKK). The segment covering 807–838 (APPNTDWRFSQAQRPGTSGSQNGDDTGTWPNN) has biased composition (polar residues). The span at 919-929 (NKKKSGKKEKK) shows a compositional bias: basic residues.

The protein localises to the cell membrane. Potential calcium-dependent cell-adhesion protein. May be involved in the establishment and maintenance of specific neuronal connections in the brain. In Pan troglodytes (Chimpanzee), this protein is Protocadherin gamma-B7 (PCDHGB7).